The sequence spans 173 residues: NADH-ubiquinone oxidoreductase chain 6 (173 aa).

5 helical membrane-spanning segments follow: residues 1 to 21 (MVYF…AVAS), 25 to 45 (PYFA…LLVG), 53 to 73 (LVLF…TAAL), 82 to 102 (WGDW…FFVG), and 141 to 161 (GIML…ILEL).

This sequence belongs to the complex I subunit 6 family.

It localises to the mitochondrion membrane. It carries out the reaction a ubiquinone + NADH + 5 H(+)(in) = a ubiquinol + NAD(+) + 4 H(+)(out). Its function is as follows. Core subunit of the mitochondrial membrane respiratory chain NADH dehydrogenase (Complex I) that is believed to belong to the minimal assembly required for catalysis. Complex I functions in the transfer of electrons from NADH to the respiratory chain. The immediate electron acceptor for the enzyme is believed to be ubiquinone. The protein is NADH-ubiquinone oxidoreductase chain 6 (MT-ND6) of Squalus acanthias (Spiny dogfish).